The primary structure comprises 165 residues: MSLNQLKAPRGANRAKKRVGRGQGSGLGKTAGRGGKGQKARSGNMHFEGFEGGQMPLQRRLPKFGFHNIFRRELEEVKVGDLQGLSGVVDPAALKSAGLVRGNRDGVVVLAGGELSSALTVKVHRVTAGARAAIEKAGGKVELIPAPQTMHQKAKAAKKAAAQAK.

The tract at residues 1 to 44 (MSLNQLKAPRGANRAKKRVGRGQGSGLGKTAGRGGKGQKARSGN) is disordered. A compositionally biased stretch (gly residues) spans 21–37 (RGQGSGLGKTAGRGGKG).

The protein belongs to the universal ribosomal protein uL15 family. Part of the 50S ribosomal subunit.

Its function is as follows. Binds to the 23S rRNA. This chain is Large ribosomal subunit protein uL15, found in Anaeromyxobacter dehalogenans (strain 2CP-C).